Here is a 490-residue protein sequence, read N- to C-terminus: DNA-binding protein D-ETS-3 (490 aa).

Disordered regions lie at residues 190 to 255 (TASS…SGGG) and 271 to 294 (SSTQ…SQLR). Over residues 196–207 (HVEHKVRADKST) the composition is skewed to basic and acidic residues. Positions 211–227 (ATTSSHAAAPSSSSSAS) are enriched in low complexity. Gly residues predominate over residues 244-255 (GTGGGASASGGG). Low complexity predominate over residues 271–280 (SSTQSQGYSS). Residues 317 to 397 (IQLWQFLLEL…HGKRYAYKFD (81 aa)) constitute a DNA-binding region (ETS).

It belongs to the ETS family. As to expression, embryonic ventral nervous system, higher in the thoracic than abdominal segments.

Its subcellular location is the nucleus. This is DNA-binding protein D-ETS-3 (Ets65A) from Drosophila melanogaster (Fruit fly).